Consider the following 254-residue polypeptide: 3-oxo-5-alpha-steroid 4-dehydrogenase 2 (254 aa).

A run of 4 helical transmembrane segments spans residues 8–28 (SPVL…LYFA), 72–92 (PRSL…AHYF), 146–166 (FSLG…SDYI), and 206–226 (LATW…FLGL).

This sequence belongs to the steroid 5-alpha reductase family.

It is found in the microsome membrane. It localises to the endoplasmic reticulum membrane. It catalyses the reaction a 3-oxo-5alpha-steroid + NADP(+) = a 3-oxo-Delta(4)-steroid + NADPH + H(+). It carries out the reaction 17beta-hydroxy-5alpha-androstan-3-one + NADP(+) = testosterone + NADPH + H(+). The catalysed reaction is 5alpha-pregnane-3,20-dione + NADP(+) = progesterone + NADPH + H(+). Converts testosterone (T) into 5-alpha-dihydrotestosterone (DHT) and progesterone or corticosterone into their corresponding 5-alpha-3-oxosteroids. It plays a central role in sexual differentiation and androgen physiology. The protein is 3-oxo-5-alpha-steroid 4-dehydrogenase 2 (SRD5A2) of Sus scrofa (Pig).